A 435-amino-acid polypeptide reads, in one-letter code: GTPase Obg (435 aa).

Residues 6–164 (ADFVDRVKIF…RWLELELKIL (159 aa)) enclose the Obg domain. Residues 165 to 335 (ADVGLVGYPN…LVSKLASIVR (171 aa)) enclose the OBG-type G domain. GTP contacts are provided by residues 171 to 178 (GYPNVGKS), 196 to 200 (FTTLI), 217 to 220 (DIPG), 287 to 290 (NKID), and 316 to 318 (SAV). 2 residues coordinate Mg(2+): Ser-178 and Thr-198. Positions 357–435 (RRLPEKFHLE…IGDFEFEYRE (79 aa)) constitute an OCT domain.

Belongs to the TRAFAC class OBG-HflX-like GTPase superfamily. OBG GTPase family. As to quaternary structure, monomer. The cofactor is Mg(2+).

It is found in the cytoplasm. An essential GTPase which binds GTP, GDP and possibly (p)ppGpp with moderate affinity, with high nucleotide exchange rates and a fairly low GTP hydrolysis rate. Plays a role in control of the cell cycle, stress response, ribosome biogenesis and in those bacteria that undergo differentiation, in morphogenesis control. This is GTPase Obg from Thermotoga petrophila (strain ATCC BAA-488 / DSM 13995 / JCM 10881 / RKU-1).